Reading from the N-terminus, the 193-residue chain is UPF0301 protein SAV_5129 (193 aa).

It belongs to the UPF0301 (AlgH) family.

The sequence is that of UPF0301 protein SAV_5129 from Streptomyces avermitilis (strain ATCC 31267 / DSM 46492 / JCM 5070 / NBRC 14893 / NCIMB 12804 / NRRL 8165 / MA-4680).